Consider the following 295-residue polypeptide: Geranylfarnesyl diphosphate synthase (295 aa).

Isopentenyl diphosphate contacts are provided by Lys51, Arg54, and His83. Mg(2+) is bound by residues Asp90 and Asp94. An all-trans-polyprenyl diphosphate is bound at residue Arg99. Arg100 contacts isopentenyl diphosphate. 3 residues coordinate an all-trans-polyprenyl diphosphate: Lys174, Thr175, and Gln212.

This sequence belongs to the FPP/GGPP synthase family. Homodimer. Mg(2+) serves as cofactor.

The catalysed reaction is isopentenyl diphosphate + (2E,6E,10E)-geranylgeranyl diphosphate = (2E,6E,10E,14E)-geranylfarnesyl diphosphate + diphosphate. In terms of biological role, involved in biosynthesis of the polyprenyl side-chain of methanophenazine, an electron carrier utilized for methanogenesis. Catalyzes the condensation of isopentenyl pyrophosphate with the allylic pyrophosphates to yield geranylfarnesyl diphosphate (GFPP). It prefers geranylgeranyl diphosphate (GGPP) and farnesyl diphosphate (FPP) as allylic substrate. This is Geranylfarnesyl diphosphate synthase from Methanosarcina mazei (strain ATCC BAA-159 / DSM 3647 / Goe1 / Go1 / JCM 11833 / OCM 88) (Methanosarcina frisia).